The sequence spans 361 residues: Peptide chain release factor 1 (361 aa).

Gln237 is subject to N5-methylglutamine. Basic and acidic residues predominate over residues 287–297; the sequence is KQQKEQSDTRK. Residues 287–307 form a disordered region; sequence KQQKEQSDTRKNLVGSGDRSE.

Belongs to the prokaryotic/mitochondrial release factor family. Post-translationally, methylated by PrmC. Methylation increases the termination efficiency of RF1.

The protein localises to the cytoplasm. Its function is as follows. Peptide chain release factor 1 directs the termination of translation in response to the peptide chain termination codons UAG and UAA. The polypeptide is Peptide chain release factor 1 (Francisella philomiragia subsp. philomiragia (strain ATCC 25017 / CCUG 19701 / FSC 153 / O#319-036)).